A 400-amino-acid chain; its full sequence is Endophilin-B2 (400 aa).

Residue methionine 1 is modified to N-acetylmethionine. Residues 1 to 27 form a membrane-binding amphipathic helix region; it reads MDFNMKKLASDAGIFFTRAVQFTEEKF. Position 10 is a phosphoserine (serine 10). The 264-residue stretch at 24 to 287 folds into the BAR domain; it reads EEKFGQAEKT…LGSSQGAIFP (264 aa). Positions 205-234 form a coiled coil; that stretch reads SASALWNDEVDKAEQELRVAQTEFDRQAEV. One can recognise an SH3 domain in the interval 340-400; it reads SGTRKARVLY…VPVTYLELLS (61 aa). Position 400 is a phosphoserine (serine 400).

This sequence belongs to the endophilin family. Homodimer, and heterodimer with SH3GLB1.

Its subcellular location is the cytoplasm. The chain is Endophilin-B2 (Sh3glb2) from Mus musculus (Mouse).